Consider the following 776-residue polypeptide: Ribosomal biogenesis protein LAS1L (776 aa).

The segment covering 185 to 227 (DEDQLDAEDPEEEEREIIADDVLEEIPEPQDDDKDEELAVEDD) has biased composition (acidic residues). The interval 185–247 (DEDQLDAEDP…SHPEPSSRHK (63 aa)) is disordered. The segment covering 228–247 (ANTKGNEEVASHPEPSSRHK) has biased composition (basic and acidic residues). Phosphoserine is present on residues Ser-425 and Ser-509. Positions 501 to 646 (KAIEGSSSSS…DYDDDEEEDR (146 aa)) are disordered. The span at 544 to 557 (GNLKDVKQEEKKEN) shows a compositional bias: basic and acidic residues. Acidic residues-rich tracts occupy residues 558–602 (EEEE…EEEE) and 611–646 (MEAD…EEDR). Ser-658 is subject to Phosphoserine. The interaction with NOL9 stretch occupies residues 677 to 696 (SAWQVSSEDVRWGTFPLGRL). The segment at 733–759 (SSTLSLCCGGSNTNSSSSSSSGNMEGL) is disordered. Residues 741 to 755 (GGSNTNSSSSSSSGN) show a composition bias toward low complexity.

This sequence belongs to the LAS1 family. In terms of assembly, component of some MLL1/MLL complex, at least composed of the core components KMT2A/MLL1, ASH2L, HCFC1/HCF1, WDR5 and RBBP5, as well as the facultative components BACC1, CHD8, E2F6, HSP70, INO80C, KANSL1, LAS1L, MAX, MCRS1, MGA, MYST1/MOF, PELP1, PHF20, PRP31, RING2, RUVB1/TIP49A, RUVB2/TIP49B, SENP3, TAF1, TAF4, TAF6, TAF7, TAF9 and TEX10. Component of the 5FMC complex, at least composed of PELP1, LAS1L, TEX10, WDR18 and SENP3; the complex interacts with methylated CHTOP and ZNF148. Interacts with NOL9 to form an ITS2 pre-rRNA endonuclease-kinase complex.

Its subcellular location is the nucleus. It localises to the nucleolus. It is found in the nucleoplasm. The protein localises to the cytoplasm. Functionally, required for the synthesis of the 60S ribosomal subunit and maturation of the 28S rRNA. Functions as a component of the Five Friends of Methylated CHTOP (5FMC) complex; the 5FMC complex is recruited to ZNF148 by methylated CHTOP, leading to desumoylation of ZNF148 and subsequent transactivation of ZNF148 target genes. Required for the efficient pre-rRNA processing at both ends of internal transcribed spacer 2 (ITS2). The sequence is that of Ribosomal biogenesis protein LAS1L (Las1l) from Mus musculus (Mouse).